A 124-amino-acid chain; its full sequence is MPTINQLIRIGREDQKKRTKSPALKACPQRRGVCTRVMTFTPKKPNSALRKVARVRLTTGIEVTAYIPGEGHNLQEHNVVLIRGGRVKDLPGVRYHIIRGTLDTLGVDKRRKGRSKYGAKRPKA.

A 3-methylthioaspartic acid modification is found at D89.

This sequence belongs to the universal ribosomal protein uS12 family. Part of the 30S ribosomal subunit. Contacts proteins S8 and S17. May interact with IF1 in the 30S initiation complex.

Functionally, with S4 and S5 plays an important role in translational accuracy. In terms of biological role, interacts with and stabilizes bases of the 16S rRNA that are involved in tRNA selection in the A site and with the mRNA backbone. Located at the interface of the 30S and 50S subunits, it traverses the body of the 30S subunit contacting proteins on the other side and probably holding the rRNA structure together. The combined cluster of proteins S8, S12 and S17 appears to hold together the shoulder and platform of the 30S subunit. The polypeptide is Small ribosomal subunit protein uS12 (Leptospira biflexa serovar Patoc (strain Patoc 1 / Ames)).